Consider the following 215-residue polypeptide: MKTVLLTGFDPFGGESINPAWEVAKSLHEKTIREYKIISKQVPTVFHKSIQVLKEYIDELNPEIIICIGQAGGRPDITIERVAINIDDARIADNEGNQPVDVPVVEEGSAAYWSTLPMKAIVKRLQAEGIPASVSQTAGTFVCNHLFYGLMHELEKQDQKIKGGFVHIPFLPEQASKYPGQSSMSLSTIRKGIELAVEVTTTVEVDIVEVGGTTH.

Catalysis depends on residues Glu-80, Cys-143, and His-167.

Belongs to the peptidase C15 family. In terms of assembly, homotetramer.

The protein resides in the cytoplasm. It carries out the reaction Release of an N-terminal pyroglutamyl group from a polypeptide, the second amino acid generally not being Pro.. In terms of biological role, removes 5-oxoproline from various penultimate amino acid residues except L-proline. The polypeptide is Pyrrolidone-carboxylate peptidase (Bacillus cereus (strain ZK / E33L)).